The following is a 160-amino-acid chain: ATP synthase subunit delta, mitochondrial (160 aa).

The transit peptide at 1–22 directs the protein to the mitochondrion; the sequence is MLRSIIGKSASRSLNFVAKRSY.

This sequence belongs to the ATPase epsilon chain family. As to quaternary structure, F-type ATPases have 2 components, CF(1) - the catalytic core - and CF(0) - the membrane proton channel. CF(1) has five subunits: alpha(3), beta(3), gamma(1), delta(1), epsilon(1). CF(0) has three main subunits: a, b and c.

The protein resides in the mitochondrion. The protein localises to the mitochondrion inner membrane. Functionally, mitochondrial membrane ATP synthase (F(1)F(0) ATP synthase or Complex V) produces ATP from ADP in the presence of a proton gradient across the membrane which is generated by electron transport complexes of the respiratory chain. F-type ATPases consist of two structural domains, F(1) - containing the extramembraneous catalytic core, and F(0) - containing the membrane proton channel, linked together by a central stalk and a peripheral stalk. During catalysis, ATP turnover in the catalytic domain of F(1) is coupled via a rotary mechanism of the central stalk subunits to proton translocation. Part of the complex F(1) domain and of the central stalk which is part of the complex rotary element. Rotation of the central stalk against the surrounding alpha(3)beta(3) subunits leads to hydrolysis of ATP in three separate catalytic sites on the beta subunits. The sequence is that of ATP synthase subunit delta, mitochondrial (ATP16) from Saccharomyces cerevisiae (strain ATCC 204508 / S288c) (Baker's yeast).